The primary structure comprises 205 residues: Putative 3-methyladenine DNA glycosylase (205 aa).

The protein belongs to the DNA glycosylase MPG family.

The polypeptide is Putative 3-methyladenine DNA glycosylase (Bacillus thuringiensis (strain Al Hakam)).